The following is a 122-amino-acid chain: Large ribosomal subunit protein uL14 (122 aa).

The protein belongs to the universal ribosomal protein uL14 family. In terms of assembly, part of the 50S ribosomal subunit. Forms a cluster with proteins L3 and L19. In the 70S ribosome, L14 and L19 interact and together make contacts with the 16S rRNA in bridges B5 and B8.

Functionally, binds to 23S rRNA. Forms part of two intersubunit bridges in the 70S ribosome. This is Large ribosomal subunit protein uL14 from Limosilactobacillus fermentum (strain NBRC 3956 / LMG 18251) (Lactobacillus fermentum).